The primary structure comprises 135 residues: Succinate dehydrogenase assembly factor 3, mitochondrial (135 aa).

The interval 73–101 (KENSNNNDNYNNNNNDNNNDNNNFINIGQ) is disordered. The segment covering 75–95 (NSNNNDNYNNNNNDNNNDNNN) has biased composition (low complexity).

The protein belongs to the complex I LYR family. SDHAF3 subfamily. Interacts with the iron-sulfur protein subunit within the SDH catalytic dimer.

It localises to the mitochondrion matrix. In terms of biological role, plays an essential role in the assembly of succinate dehydrogenase (SDH), an enzyme complex (also referred to as respiratory complex II) that is a component of both the tricarboxylic acid (TCA) cycle and the mitochondrial electron transport chain, and which couples the oxidation of succinate to fumarate with the reduction of ubiquinone (coenzyme Q) to ubiquinol. Promotes maturation of the iron-sulfur protein subunit of the SDH catalytic dimer, protecting it from the deleterious effects of oxidants. May act together with SDHAF1. This is Succinate dehydrogenase assembly factor 3, mitochondrial (acn9) from Dictyostelium discoideum (Social amoeba).